A 661-amino-acid polypeptide reads, in one-letter code: MTGGRFDFDDGGTYCGGWEEGKAHGHGICTGPKGQGEYSGSWSHGFEVVGGYTWPSGNTYQGYWAQGKRHGLGVETKGKWMYRGEWSHGFKGRYGVRQSLCTPARYEGTWSNGLQDGYGVETYGDGGTYQGQWAGGMRHGYGVRQSVPYGMATVIRSPLRTSLASLRSEQSNGSVLHDAAAAADSPAGTRGGFVLNFHADAELAGKKKGGLFRRGSLLGSMKLRKSESKSSISSKRSSVRSDAAMSRISSSDANSTISFGDVDCDFCPVEDHVDATTTETYMGEWKNDKRNGFGVSERSNGMKYEGEWANNKRHGYGCTVFPDGSKEEGKYKNNILVRGIRKQLIPIRHTKTREKVDRAIEGAQRAAAMARTKVEIANSRTAHARAKADAADQAALAARQECDIARAVARELSPDFYQPGPDYVKQRFQEGVDAKENPEEKVPEKPPTPKESPHFYRKGTTPPRSPEASPKHSHSPASSPKPLKKQNPSSGARLNQDKRSVADEQVTAIVNKPLMSKAPTKEAGAVVPQSKYSGRHHIPNPSNGELHSQYHGYYVKLNAPQHPPVDVEDGDGSSQSSSALVHKPSANKWSPSKSVTKPVAKESKAEPKAKKSELAIPKNPASNDSCPALEKEANSGPNSIMIVLVMLLNIGLAILFVHFLT.

The Cytoplasmic portion of the chain corresponds to 1-639 (MTGGRFDFDD…EKEANSGPNS (639 aa)). MORN repeat units follow at residues 14 to 36 (YCGG…KGQG), 38 to 59 (YSGS…SGNT), 60 to 82 (YQGY…KWMY), 106 to 128 (YEGT…DGGT), and 129 to 151 (YQGQ…PYGM). Phosphoserine occurs at positions 157, 216, and 220. The interval 228–247 (SKSSISSKRSSVRSDAAMSR) is disordered. MORN repeat units lie at residues 281 to 303 (YMGE…NGMK) and 304 to 326 (YEGE…DGSK). The span at 433–454 (DAKENPEEKVPEKPPTPKESPH) shows a compositional bias: basic and acidic residues. The tract at residues 433 to 631 (DAKENPEEKV…SNDSCPALEK (199 aa)) is disordered. At T448 the chain carries Phosphothreonine. A Phosphoserine modification is found at S452. The residue at position 461 (T461) is a Phosphothreonine. Phosphoserine is present on residues S465, S469, and S475. Residues 599 to 613 (VAKESKAEPKAKKSE) show a composition bias toward basic and acidic residues. The chain crosses the membrane as a helical; Anchor for type IV membrane protein span at residues 640-660 (IMIVLVMLLNIGLAILFVHFL).

Belongs to the junctophilin family. As to expression, abundantly expressed in skeletal muscle. Very low levels in heart.

The protein resides in the cell membrane. It localises to the endoplasmic reticulum membrane. It is found in the sarcoplasmic reticulum membrane. In terms of biological role, junctophilins contribute to the formation of junctional membrane complexes (JMCs) which link the plasma membrane with the endoplasmic or sarcoplasmic reticulum in excitable cells. Provides a structural foundation for functional cross-talk between the cell surface and intracellular calcium release channels. JPH1 contributes to the construction of the skeletal muscle triad by linking the t-tubule (transverse-tubule) and SR (sarcoplasmic reticulum) membranes. The chain is Junctophilin-1 (JPH1) from Homo sapiens (Human).